Here is a 475-residue protein sequence, read N- to C-terminus: L-ornithine N(5)-monooxygenase (475 aa).

FAD contacts are provided by residues 65-73 and glutamine 84; that span reads ERQPEFGWH. Lysine 89 lines the substrate pocket. An FAD-binding site is contributed by valine 150. An NADP(+)-binding site is contributed by 238 to 241; that stretch reads GGQS. Substrate contacts are provided by residues 277-280 and asparagine 307; that span reads NEIF. NADP(+) is bound at residue 307 to 309; that stretch reads NYG. 446–448 contributes to the FAD binding site; it reads SLL. Serine 449 serves as a coordination point for substrate.

The protein belongs to the lysine N(6)-hydroxylase/L-ornithine N(5)-oxygenase family. As to quaternary structure, homotetramer. It depends on FAD as a cofactor.

The catalysed reaction is L-ornithine + NADPH + O2 = N(5)-hydroxy-L-ornithine + NADP(+) + H2O. The enzyme catalyses L-ornithine + NADH + O2 = N(5)-hydroxy-L-ornithine + NAD(+) + H2O. It functions in the pathway siderophore biosynthesis. In terms of biological role, L-ornithine N(5)-monooxygenase; part of the gene cluster that mediates the biosynthesis of hydroxamate-containing siderophores that play a critical role in virulence via intracellular iron acquisition during macrophage infection. SID1 catalyzes the conversion of L-ornithine to N(5)-hydroxyornithine, the first step in the biosynthesis of all hydroxamate-containing siderophores. The sequence is that of L-ornithine N(5)-monooxygenase from Ajellomyces capsulatus (Darling's disease fungus).